The sequence spans 619 residues: Zinc finger CCCH domain-containing protein 67 (619 aa).

ANK repeat units lie at residues E52–P81 and S88–L120. C3H1-type zinc fingers lie at residues H213 to F241 and Q249 to D273. Residues S308–Q341 form a disordered region. A compositionally biased stretch (gly residues) spans A322 to A337.

The protein is Zinc finger CCCH domain-containing protein 67 of Oryza sativa subsp. japonica (Rice).